We begin with the raw amino-acid sequence, 148 residues long: Trypsin inhibitor CMe (148 aa).

The first 24 residues, 1–24 (MAFKYQLLLSAAVMLAILVATATS), serve as a signal peptide directing secretion.

The protein belongs to the protease inhibitor I6 (cereal trypsin/alpha-amylase inhibitor) family. Five disulfide bonds, which are essential for the inhibitor activity, are probably present. Expressed in the developing endosperm. Not detected in embryo, aleurone, coleoptile, roots and leaves.

Its subcellular location is the secreted. Functionally, inhibits trypsin in vitro. Probably plays a protective role through inhibition of insect midgut proteases. The chain is Trypsin inhibitor CMe (ITR1) from Hordeum vulgare (Barley).